The following is a 635-amino-acid chain: 1-deoxy-D-xylulose-5-phosphate synthase (635 aa).

Thiamine diphosphate-binding positions include histidine 74 and 115–117 (AHS). Aspartate 146 lines the Mg(2+) pocket. Thiamine diphosphate is bound by residues 147–148 (GA), asparagine 176, tyrosine 283, and glutamate 365. A Mg(2+)-binding site is contributed by asparagine 176.

The protein belongs to the transketolase family. DXPS subfamily. In terms of assembly, homodimer. It depends on Mg(2+) as a cofactor. Thiamine diphosphate is required as a cofactor.

It catalyses the reaction D-glyceraldehyde 3-phosphate + pyruvate + H(+) = 1-deoxy-D-xylulose 5-phosphate + CO2. Its pathway is metabolic intermediate biosynthesis; 1-deoxy-D-xylulose 5-phosphate biosynthesis; 1-deoxy-D-xylulose 5-phosphate from D-glyceraldehyde 3-phosphate and pyruvate: step 1/1. Its function is as follows. Catalyzes the acyloin condensation reaction between C atoms 2 and 3 of pyruvate and glyceraldehyde 3-phosphate to yield 1-deoxy-D-xylulose-5-phosphate (DXP). This Paraburkholderia xenovorans (strain LB400) protein is 1-deoxy-D-xylulose-5-phosphate synthase.